The chain runs to 377 residues: Flap endonuclease 1 (377 aa).

The segment at Met-1–Arg-105 is N-domain. Asp-34 contacts Mg(2+). Residues Arg-47 and Arg-71 each coordinate DNA. A Mg(2+)-binding site is contributed by Asp-87. Residues Ser-99–Ala-119 form a disordered region. The segment at Glu-120–Tyr-251 is I-domain. Residues Glu-156, Glu-158, Asp-177, and Asp-179 each coordinate Mg(2+). Glu-156 is a DNA binding site. The DNA site is built by Gly-229 and Asp-231. Residue Asp-231 participates in Mg(2+) binding. The interval Val-338–Phe-346 is interaction with PCNA.

This sequence belongs to the XPG/RAD2 endonuclease family. FEN1 subfamily. In terms of assembly, interacts with PCNA. Three molecules of FEN1 bind to one PCNA trimer with each molecule binding to one PCNA monomer. PCNA stimulates the nuclease activity without altering cleavage specificity. Requires Mg(2+) as cofactor. Phosphorylated. Phosphorylation upon DNA damage induces relocalization to the nuclear plasma.

Its subcellular location is the nucleus. It is found in the nucleolus. The protein localises to the nucleoplasm. The protein resides in the mitochondrion. Its function is as follows. Structure-specific nuclease with 5'-flap endonuclease and 5'-3' exonuclease activities involved in DNA replication and repair. During DNA replication, cleaves the 5'-overhanging flap structure that is generated by displacement synthesis when DNA polymerase encounters the 5'-end of a downstream Okazaki fragment. It enters the flap from the 5'-end and then tracks to cleave the flap base, leaving a nick for ligation. Also involved in the long patch base excision repair (LP-BER) pathway, by cleaving within the apurinic/apyrimidinic (AP) site-terminated flap. Acts as a genome stabilization factor that prevents flaps from equilibrating into structures that lead to duplications and deletions. Also possesses 5'-3' exonuclease activity on nicked or gapped double-stranded DNA, and exhibits RNase H activity. Also involved in replication and repair of rDNA and in repairing mitochondrial DNA. This is Flap endonuclease 1 from Vanderwaltozyma polyspora (strain ATCC 22028 / DSM 70294 / BCRC 21397 / CBS 2163 / NBRC 10782 / NRRL Y-8283 / UCD 57-17) (Kluyveromyces polysporus).